We begin with the raw amino-acid sequence, 1657 residues long: Ras GTPase-activating-like protein IQGAP1 (1657 aa).

Residue S2 is modified to N-acetylserine. The residue at position 2 (S2) is a Phosphoserine. In terms of domain architecture, Calponin-homology (CH) spans 44 to 159 (LCHLEEAKRW…YCIHALSLYL (116 aa)). Y172 is subject to Phosphotyrosine. Position 330 is a phosphoserine (S330). Positions 685-710 (WVKHWVKGGYHYYHNLETQAGGWAEP) constitute a WW domain. 4 IQ domains span residues 745 to 774 (NEGL…FLKK), 775 to 804 (QIPA…YLHS), 805 to 834 (HKDE…YFRD), and 835 to 864 (HIND…AEDP). The C1 stretch occupies residues 956-1274 (GGLKALSKEK…FFQVACDVPE (319 aa)). The Ras-GAP domain occupies 1020–1269 (YLLLRLFQTA…QKFRRFFQVA (250 aa)). Residues 1276 to 1657 (QDKFNVDEYS…FLLNKKFYGK (382 aa)) form a C2 region. S1441 carries the post-translational modification Phosphoserine.

Interacts with CDC42; the interaction is demonstrated with IQGAP1 in GTP-bound and in nucleotide-free state. Interacts with RAC1. Does not interact with RHOA. Interacts with TSG101. Interacts with PAK6. Interacts with SASH1. Interacts with PJVK. Interacts with SLC26A4. This interaction enhances the chloride-bicarbonate exchange activity of SLC26A4. Interacts with SVEP1. Interacts with ILK; the interaction is required for localization of IQGAP to the cell cortex. In terms of assembly, (Microbial infection) In case of infection, interacts with S.typhimurium protein sseI. In terms of tissue distribution, expressed in the kidney (at protein level).

It is found in the cell membrane. The protein localises to the nucleus. The protein resides in the cytoplasm. Its subcellular location is the cell cortex. It localises to the apical cell membrane. It is found in the basolateral cell membrane. In terms of biological role, plays a crucial role in regulating the dynamics and assembly of the actin cytoskeleton. Recruited to the cell cortex by interaction with ILK which allows it to cooperate with its effector DIAPH1 to locally stabilize microtubules and allow stable insertion of caveolae into the plasma membrane. Binds to activated CDC42 but does not stimulate its GTPase activity. Associates with calmodulin. May promote neurite outgrowth. May play a possible role in cell cycle regulation by contributing to cell cycle progression after DNA replication arrest. The protein is Ras GTPase-activating-like protein IQGAP1 (Iqgap1) of Mus musculus (Mouse).